Reading from the N-terminus, the 123-residue chain is Amoebiasin-2 (123 aa).

The N-terminal stretch at 1–16 (MKQFIFFALLCTSTYA) is a signal peptide. The short motif at 45 to 50 (NPSTGY) is the BC loop element. The DE loop signature appears at 71-81 (EPHPSGMVGFP). The short motif at 105 to 114 (PWEKGKEPLR) is the FG loop element.

Belongs to the protease inhibitor I42 family. As to quaternary structure, monomer. May form homodimer. Interacts with cysteine protease CP2. Interacts with cysteine protease CP5.

The protein resides in the cytoplasmic vesicle. Its subcellular location is the lysosome. It is found in the phagosome. Functionally, cysteine protease inhibitor. Inhibits cysteine proteases CP1, CP2 and to a lesser extent CP5. This Entamoeba histolytica (strain ATCC 30459 / HM-1:IMSS / ABRM) protein is Amoebiasin-2.